The chain runs to 164 residues: Crossover junction endodeoxyribonuclease RuvC (164 aa).

Residues Asp-7, Glu-67, and Asp-140 contribute to the active site. Mg(2+)-binding residues include Asp-7, Glu-67, and Asp-140.

This sequence belongs to the RuvC family. Homodimer which binds Holliday junction (HJ) DNA. The HJ becomes 2-fold symmetrical on binding to RuvC with unstacked arms; it has a different conformation from HJ DNA in complex with RuvA. In the full resolvosome a probable DNA-RuvA(4)-RuvB(12)-RuvC(2) complex forms which resolves the HJ. It depends on Mg(2+) as a cofactor.

Its subcellular location is the cytoplasm. It carries out the reaction Endonucleolytic cleavage at a junction such as a reciprocal single-stranded crossover between two homologous DNA duplexes (Holliday junction).. The RuvA-RuvB-RuvC complex processes Holliday junction (HJ) DNA during genetic recombination and DNA repair. Endonuclease that resolves HJ intermediates. Cleaves cruciform DNA by making single-stranded nicks across the HJ at symmetrical positions within the homologous arms, yielding a 5'-phosphate and a 3'-hydroxyl group; requires a central core of homology in the junction. The consensus cleavage sequence is 5'-(A/T)TT(C/G)-3'. Cleavage occurs on the 3'-side of the TT dinucleotide at the point of strand exchange. HJ branch migration catalyzed by RuvA-RuvB allows RuvC to scan DNA until it finds its consensus sequence, where it cleaves and resolves the cruciform DNA. In Finegoldia magna (strain ATCC 29328 / DSM 20472 / WAL 2508) (Peptostreptococcus magnus), this protein is Crossover junction endodeoxyribonuclease RuvC.